We begin with the raw amino-acid sequence, 1149 residues long: Nitric oxide synthase, inducible (1149 aa).

The interval 22–83 (KDINNNVGKA…HKPSPTCSQH (62 aa)) is disordered. The short motif at 23–27 (DINNN) is the DINNN-motif; mediates interaction with SPSB1, SPSB2 and SPSB4 element. Polar residues predominate over residues 50–61 (KHQNGSSQSLTG). Zn(2+) contacts are provided by Cys109 and Cys114. (6R)-L-erythro-5,6,7,8-tetrahydrobiopterin is bound at residue Ser117. Cys199 serves as a coordination point for heme b. L-arginine is bound by residues Gln262, Trp371, Tyr372, and Glu376. (6R)-L-erythro-5,6,7,8-tetrahydrobiopterin contacts are provided by Arg380, Ile461, Trp462, and Phe475. Heme b is bound at residue Tyr490. Positions 514-534 (FRVLAKATLFASLLMRKMMAS) are calmodulin-binding. The region spanning 538-676 (ATILFATETG…AFCTWAVQTF (139 aa)) is the Flavodoxin-like domain. Positions 544, 545, 546, 548, and 549 each coordinate FMN. At Tyr574 the chain carries Phosphotyrosine. Residues Ser590, Thr591, Ser627, Arg632, Cys634, Glu660, and Gln664 each contribute to the FMN site. The 241-residue stretch at 729–969 (TDVFTMRLKS…VRSVNSFQLP (241 aa)) folds into the FAD-binding FR-type domain. Arg749 contacts NADP(+). Positions 771, 905, 907, 908, 923, and 925 each coordinate FAD. Thr928 is an NADP(+) binding site. FAD is bound by residues Tyr929, Val942, Cys943, and Ser944. Residues Thr983, Arg1016, Ser1045, Arg1046, Lys1052, Tyr1054, Gln1056, and Asp1089 each contribute to the NADP(+) site.

Belongs to the NOS family. In terms of assembly, homodimer. Interacts with NHERF1. Interacts with GAPDH; induced by oxidatively-modified low-densitity lipoprotein (LDL(ox)). Interacts with S100A8 and S100A9 to form the iNOS-S100A8/9 transnitrosylase complex. Interacts with SPSB1, SPSB2 and SPSB4. Interacts with ELOC and CUL5 in the presence of SPSB1 or SPSB2 or SPSB4. Forms a complex with ASL, ASS1 and HSP90AA1; the complex regulates cell-autonomous L-arginine synthesis and citrulline recycling while channeling extracellular L-arginine to nitric oxide synthesis pathway. It depends on heme b as a cofactor. FAD serves as cofactor. FMN is required as a cofactor. Requires (6R)-L-erythro-5,6,7,8-tetrahydrobiopterin as cofactor. Polyubiquitinated; mediated by SPSB1, SPSB2 and SPSB4, leading to proteasomal degradation. In terms of tissue distribution, expressed in the lung and colon. Not detected in the heart, aorta, liver, kidney, and spleen.

It localises to the cytoplasm. It is found in the cytosol. The catalysed reaction is 2 L-arginine + 3 NADPH + 4 O2 + H(+) = 2 L-citrulline + 2 nitric oxide + 3 NADP(+) + 4 H2O. Its activity is regulated as follows. Regulated by calcium/calmodulin. Its function is as follows. Produces nitric oxide (NO) which is a messenger molecule with diverse functions throughout the body. In macrophages, NO mediates tumoricidal and bactericidal actions. Also has nitrosylase activity and mediates cysteine S-nitrosylation of cytoplasmic target proteins such PTGS2/COX2. As component of the iNOS-S100A8/9 transnitrosylase complex involved in the selective inflammatory stimulus-dependent S-nitrosylation of GAPDH implicated in regulation of the GAIT complex activity and probably multiple targets including ANXA5, EZR, MSN and VIM. Involved in inflammation, enhances the synthesis of pro-inflammatory mediators such as IL6 and IL8. The sequence is that of Nitric oxide synthase, inducible (NOS2) from Cavia porcellus (Guinea pig).